The chain runs to 153 residues: ATP synthase subunit b' (153 aa).

A helical transmembrane segment spans residues threonine 20–phenylalanine 40.

It belongs to the ATPase B chain family. In terms of assembly, F-type ATPases have 2 components, F(1) - the catalytic core - and F(0) - the membrane proton channel. F(1) has five subunits: alpha(3), beta(3), gamma(1), delta(1), epsilon(1). F(0) has four main subunits: a(1), b(1), b'(1) and c(10-14). The alpha and beta chains form an alternating ring which encloses part of the gamma chain. F(1) is attached to F(0) by a central stalk formed by the gamma and epsilon chains, while a peripheral stalk is formed by the delta, b and b' chains.

Its subcellular location is the cellular thylakoid membrane. Its function is as follows. F(1)F(0) ATP synthase produces ATP from ADP in the presence of a proton or sodium gradient. F-type ATPases consist of two structural domains, F(1) containing the extramembraneous catalytic core and F(0) containing the membrane proton channel, linked together by a central stalk and a peripheral stalk. During catalysis, ATP synthesis in the catalytic domain of F(1) is coupled via a rotary mechanism of the central stalk subunits to proton translocation. Component of the F(0) channel, it forms part of the peripheral stalk, linking F(1) to F(0). The b'-subunit is a diverged and duplicated form of b found in plants and photosynthetic bacteria. The sequence is that of ATP synthase subunit b' from Prochlorococcus marinus (strain SARG / CCMP1375 / SS120).